A 331-amino-acid chain; its full sequence is Putative mitochondrial 2-oxoglutarate/malate carrier protein (331 aa).

Solcar repeat units follow at residues 39–128 (VRAA…FMSR), 140–231 (VGFK…AKAQ), and 239–329 (SSKV…LGWL). The next 6 membrane-spanning stretches (helical) occupy residues 42 to 62 (ALPFINGGLSGMVATTVIQPI), 103 to 121 (GLSAGLLRQAVYTTARIGC), 148 to 168 (AGLAAGGLAAMIGNPADLALI), 199 to 219 (GVAALWAGAAPTVVRAMALNF), 245 to 265 (LSASAIAGFFASFFSLPFDFV), and 309 to 329 (YVRIAPHAMVTLLVADYLGWL).

It belongs to the mitochondrial carrier (TC 2.A.29) family.

Its subcellular location is the mitochondrion inner membrane. Catalyzes the transport of 2-oxoglutarate across the inner mitochondrial membrane. The sequence is that of Putative mitochondrial 2-oxoglutarate/malate carrier protein (mic-33) from Neurospora crassa (strain ATCC 24698 / 74-OR23-1A / CBS 708.71 / DSM 1257 / FGSC 987).